A 71-amino-acid chain; its full sequence is Small ribosomal subunit protein bS21 (71 aa).

This sequence belongs to the bacterial ribosomal protein bS21 family.

This Hahella chejuensis (strain KCTC 2396) protein is Small ribosomal subunit protein bS21.